Consider the following 242-residue polypeptide: Uridylate kinase (242 aa).

Position 15 to 18 (Lys-15 to Gly-18) interacts with ATP. The involved in allosteric activation by GTP stretch occupies residues Gly-23–Gly-28. Position 57 (Gly-57) interacts with UMP. The ATP site is built by Gly-58 and Arg-62. Residues Asp-77 and Thr-138–Thr-145 contribute to the UMP site. Positions 165, 171, and 174 each coordinate ATP.

The protein belongs to the UMP kinase family. In terms of assembly, homohexamer.

It is found in the cytoplasm. It catalyses the reaction UMP + ATP = UDP + ADP. It participates in pyrimidine metabolism; CTP biosynthesis via de novo pathway; UDP from UMP (UMPK route): step 1/1. Allosterically activated by GTP. Inhibited by UTP. Its function is as follows. Catalyzes the reversible phosphorylation of UMP to UDP. The polypeptide is Uridylate kinase (Shewanella sp. (strain MR-4)).